Consider the following 27-residue polypeptide: Protein YkiD (27 aa).

This chain is Protein YkiD, found in Escherichia coli (strain K12).